The following is a 535-amino-acid chain: Probable histone-arginine methyltransferase 1.3 (535 aa).

N-acetylmethionine is present on Met1. One can recognise an SAM-dependent MTase PRMT-type domain in the interval 141-456 (EASSAKMYFH…QSYTIDLTLS (316 aa)). S-adenosyl-L-methionine contacts are provided by Gln158, Arg167, Gly191, Glu213, and Glu243. Catalysis depends on residues Glu257 and Glu266. Residue Ser271 participates in S-adenosyl-L-methionine binding. The tract at residues 494-517 (VAQEPPLQPQPELSTQQDIQTPND) is disordered. Residues 507–516 (STQQDIQTPN) show a composition bias toward polar residues.

This sequence belongs to the class I-like SAM-binding methyltransferase superfamily. Protein arginine N-methyltransferase family. In terms of assembly, interacts with PQT3 in the nucleus. Post-translationally, ubiquitinated by PQT3.

The protein localises to the nucleus. It is found in the cytoplasm. It carries out the reaction L-arginyl-[protein] + 2 S-adenosyl-L-methionine = N(omega),N(omega)-dimethyl-L-arginyl-[protein] + 2 S-adenosyl-L-homocysteine + 2 H(+). Functionally, methylates (mono- and asymmetric dimethylation) the guanidino nitrogens of arginyl residues in several proteins involved in DNA packaging, transcription regulation, and mRNA stability. Recruited to promoters upon gene activation, methylates histone H3 and activates transcription via chromatin remodeling. Positive regulator in the oxidative stress tolerance that promotes the expression of enzymes preventing oxidative stress such as APX1 and GPX1 by histone methylation (H3R17me2a). Confers tolerance to cadmium CdCl(2) and salt NaCl stresses. The polypeptide is Probable histone-arginine methyltransferase 1.3 (PRMT13) (Arabidopsis thaliana (Mouse-ear cress)).